Consider the following 91-residue polypeptide: DNA-binding protein HU (91 aa).

It belongs to the bacterial histone-like protein family. Homodimer.

Functionally, histone-like DNA-binding protein which is capable of wrapping DNA to stabilize it, and thus to prevent its denaturation under extreme environmental conditions. This chain is DNA-binding protein HU (hup), found in Lactococcus lactis subsp. lactis (strain IL1403) (Streptococcus lactis).